Consider the following 222-residue polypeptide: uncharacterized protein (222 aa).

Positions 1–27 (MSFTRRKFVLGMGTVIFFTGSASSLLA) form a signal peptide, tat-type signal. 4Fe-4S ferredoxin-type domains lie at 37–67 (YAMI…AQGS), 83–114 (TQYH…RDEQ), and 115–144 (GIVR…LNPV). [4Fe-4S] cluster is bound by residues cysteine 46, cysteine 49, cysteine 52, cysteine 56, cysteine 92, cysteine 95, cysteine 100, cysteine 104, cysteine 124, cysteine 127, cysteine 130, cysteine 134, cysteine 151, cysteine 154, cysteine 167, and cysteine 171.

Post-translationally, exported by the Tat system. The position of the signal peptide cleavage has not been experimentally proven. Can also be exported by the Sec system.

This is an uncharacterized protein from Escherichia coli (strain K12).